Reading from the N-terminus, the 454-residue chain is MEKGMVAMNEWIEKSKTYLWLPFTQMKDYEQHPLVIESGEGIFLTDVNGKTYYDGYSSLWLNVHGHRKKEIDDAIRAQLERIAHSTLLGAANIPAIALAEKLIEWTPSHLTRVFYSDSGAEAVEIALKIAFQYWRNIGENKKQKFVTLANGYHGDTVGAISVGAIDIFHTVYEPLMFTSYKAPFPLVYRHPSNDPNVVRDEALGALEALFAEHHEEIAAMIVEGMIQGAGGMHVMPKGYLKGVEQLCRQYNILFIVDEVATGFGRTGKRFAIEHEDVQPDIMTVAKGITGGYLPIAATLTTEAIYEAFYGDYTEFKTFFHGHSYTGNQLGCAAALANIQIFERERLIEQIQQKATFVAEQLASFNELNHVGDVRQLGLMCGIELVRDRRTHEPYPWTERMGYRTTLTMREKGMLTRPLGDVIVFMPPLASTFEQLEAMIAMMKEAIIETTEKRG.

119–120 contacts pyridoxal 5'-phosphate; sequence GA. Tyrosine 152 serves as a coordination point for substrate. Aspartate 257 provides a ligand contact to pyridoxal 5'-phosphate. The substrate site is built by lysine 286, glycine 321, and arginine 416. The residue at position 286 (lysine 286) is an N6-(pyridoxal phosphate)lysine.

It belongs to the class-III pyridoxal-phosphate-dependent aminotransferase family. BioA subfamily. As to quaternary structure, homodimer. Pyridoxal 5'-phosphate serves as cofactor.

It is found in the cytoplasm. The enzyme catalyses (8S)-8-amino-7-oxononanoate + S-adenosyl-L-methionine = S-adenosyl-4-methylsulfanyl-2-oxobutanoate + (7R,8S)-7,8-diammoniononanoate. The protein operates within cofactor biosynthesis; biotin biosynthesis; 7,8-diaminononanoate from 8-amino-7-oxononanoate (SAM route): step 1/1. Functionally, catalyzes the transfer of the alpha-amino group from S-adenosyl-L-methionine (SAM) to 7-keto-8-aminopelargonic acid (KAPA) to form 7,8-diaminopelargonic acid (DAPA). It is the only aminotransferase known to utilize SAM as an amino donor. The chain is Adenosylmethionine-8-amino-7-oxononanoate aminotransferase from Anoxybacillus flavithermus (strain DSM 21510 / WK1).